The primary structure comprises 444 residues: Presenilin sel-12 (444 aa).

The Cytoplasmic portion of the chain corresponds to 1-45; that stretch reads MPSTRRQQEGGGADAETHTVYGTNLITNRNSQEDENVVEEAELKY. A helical membrane pass occupies residues 46 to 66; the sequence is GASHVIHLFVPVSLCMALVVF. Residues 67-101 lie on the Lumenal side of the membrane; the sequence is TMNTITFYSQNNGRHLLYTPFVRETDSIVEKGLMS. A helical transmembrane segment spans residues 102–122; sequence LGNALVMLCVVVLMTVLLIVF. Over 123–130 the chain is Cytoplasmic; sequence YKYKFYKL. A helical membrane pass occupies residues 131–151; it reads IHGWLIVSSFLLLFLFTTIYV. Topologically, residues 152 to 163 are lumenal; it reads QEVLKSFDVSPS. The helical transmembrane segment at 164 to 184 threads the bilayer; the sequence is ALLVLFGLGNYGVLGMMCIHW. The Cytoplasmic segment spans residues 185-189; that stretch reads KGPLR. A helical transmembrane segment spans residues 190-210; that stretch reads LQQFYLITMSALMALVFIKYL. The Lumenal portion of the chain corresponds to 211–212; the sequence is PE. Residues 213 to 233 traverse the membrane as a helical segment; sequence WTVWFVLFVISVWDLVAVLTP. The active site involves Asp226. Residues 234-359 lie on the Cytoplasmic side of the membrane; the sequence is KGPLRYLVET…RHEEEERGVK (126 aa). Positions 275 to 331 are disordered; it reads TDPREPTSSDSNTSTAFPGEASCSSETPKRPKVKRIPQKVQIESNTTASTTQNSGVR. 2 stretches are compositionally biased toward polar residues: residues 282–300 and 315–329; these read SSDSNTSTAFPGEASCSSE and QIESNTTASTTQNSG. Residues 360-380 traverse the membrane as a helical segment; sequence LGLGDFIFYSVLLGKASSYFD. The active site involves Asp364. Topologically, residues 381–384 are lumenal; sequence WNTT. A helical transmembrane segment spans residues 385–405; that stretch reads IACYVAILIGLCFTLVLLAVF. Topologically, residues 406 to 413 are cytoplasmic; it reads KRALPALP. Positions 410 to 412 match the PAL motif; the sequence is PAL. The helical intramembrane region spans 414–434; it reads ISIFSGLIFYFCTRWIITPFV. Residues 435 to 444 are Cytoplasmic-facing; that stretch reads TQVSQKCLLY.

It belongs to the peptidase A22A family. In terms of assembly, homodimer. Component of the gamma-secretase complex, a complex probably composed of the presenilin homodimer (sel-12, hop-1 or spe-4), nicastrin (aph-2), aph-1 and pen-2. Interacts with sel-10. In terms of tissue distribution, expressed in most neurons.

The protein localises to the endoplasmic reticulum membrane. It localises to the golgi apparatus membrane. In terms of biological role, probable catalytic subunit of the gamma-secretase complex, an endoprotease complex that catalyzes the intramembrane cleavage of integral membrane proteins such as Notch receptors (lin-12 or glp-1). Provides the major presenilin function compared to hop-1 and spe-4. Required cell-autonomously for correct neurite connectivity of the AIY cholinergic interneurons and their correct functioning in thermotaxis. Required for mesodermal patterning of muscle function. Promotes basement membrane gap formation during tissue remodeling. The protein is Presenilin sel-12 of Caenorhabditis elegans.